A 1060-amino-acid chain; its full sequence is Valine--tRNA ligase, mitochondrial (1060 aa).

Residues 1–15 (MPHLPLASFRPPLWG) constitute a mitochondrion transit peptide. Residues 25–50 (PQALCTQPEPHGSPVSRRNREAKQKR) are disordered. The short motif at 146–156 (PNVTGSLHIGH) is the 'HIGH' region element. K548 carries the N6-acetyllysine modification. Positions 659–663 (KMSKS) match the 'KMSKS' region motif. K662 is a binding site for ATP.

This sequence belongs to the class-I aminoacyl-tRNA synthetase family.

The protein localises to the mitochondrion. The catalysed reaction is tRNA(Val) + L-valine + ATP = L-valyl-tRNA(Val) + AMP + diphosphate. Catalyzes the attachment of valine to tRNA(Val) in a two-step reaction: valine is first activated by ATP to form Val-AMP and then transferred to the acceptor end of tRNA(Val). In Mus musculus (Mouse), this protein is Valine--tRNA ligase, mitochondrial (Vars2).